A 236-amino-acid chain; its full sequence is N-alpha-acetyltransferase 40 (236 aa).

Gly-2 carries N-myristoyl glycine lipidation. One can recognise an N-acetyltransferase domain in the interval 63 to 217 (SDLDQKTIDW…DCTYEILSKR (155 aa)). Substrate-binding positions include Tyr-85, 127-129 (DVE), and Tyr-138. Residues 140–142 (VQL) and 148–153 (RKGVGK) each bind acetyl-CoA. Position 174 (Thr-174) interacts with substrate. Asn-179 is a binding site for acetyl-CoA. Tyr-211 serves as a coordination point for substrate.

It belongs to the acetyltransferase family. NAA40 subfamily.

The protein resides in the cytoplasm. It is found in the nucleus. It carries out the reaction N-terminal L-seryl-[histone H4] + acetyl-CoA = N-terminal N(alpha)-acetyl-L-seryl-[histone H4] + CoA + H(+). The enzyme catalyses N-terminal L-seryl-[histone H2A] + acetyl-CoA = N-terminal N(alpha)-acetyl-L-seryl-[histone H2A] + CoA + H(+). Functionally, N-alpha-acetyltransferase that specifically mediates the acetylation of the N-terminal residues of histones H4 and H2A. In contrast to other N-alpha-acetyltransferase, has a very specific selectivity for histones H4 and H2A N-terminus and specifically recognizes the 'Ser-Gly-Arg-Gly sequence'. The chain is N-alpha-acetyltransferase 40 (naa40) from Xenopus laevis (African clawed frog).